The primary structure comprises 345 residues: UDP-3-O-acylglucosamine N-acyltransferase 3 (345 aa).

The Proton acceptor role is filled by His236.

The protein belongs to the transferase hexapeptide repeat family. LpxD subfamily. Homotrimer.

It catalyses the reaction a UDP-3-O-[(3R)-3-hydroxyacyl]-alpha-D-glucosamine + a (3R)-hydroxyacyl-[ACP] = a UDP-2-N,3-O-bis[(3R)-3-hydroxyacyl]-alpha-D-glucosamine + holo-[ACP] + H(+). Its pathway is bacterial outer membrane biogenesis; LPS lipid A biosynthesis. Its function is as follows. Catalyzes the N-acylation of UDP-3-O-acylglucosamine using 3-hydroxyacyl-ACP as the acyl donor. Is involved in the biosynthesis of lipid A, a phosphorylated glycolipid that anchors the lipopolysaccharide to the outer membrane of the cell. The protein is UDP-3-O-acylglucosamine N-acyltransferase 3 of Gloeobacter violaceus (strain ATCC 29082 / PCC 7421).